A 228-amino-acid polypeptide reads, in one-letter code: 2,3-bisphosphoglycerate-dependent phosphoglycerate mutase (228 aa).

Residues 8 to 15, 21 to 22, Arg60, 87 to 90, Lys98, 114 to 115, and 183 to 184 each bind substrate; these read RHGQSVWN, TG, ERHY, RR, and GN. Catalysis depends on His9, which acts as the Tele-phosphohistidine intermediate. The Proton donor/acceptor role is filled by Glu87.

The protein belongs to the phosphoglycerate mutase family. BPG-dependent PGAM subfamily.

It carries out the reaction (2R)-2-phosphoglycerate = (2R)-3-phosphoglycerate. It functions in the pathway carbohydrate degradation; glycolysis; pyruvate from D-glyceraldehyde 3-phosphate: step 3/5. Its function is as follows. Catalyzes the interconversion of 2-phosphoglycerate and 3-phosphoglycerate. This chain is 2,3-bisphosphoglycerate-dependent phosphoglycerate mutase, found in Staphylococcus saprophyticus subsp. saprophyticus (strain ATCC 15305 / DSM 20229 / NCIMB 8711 / NCTC 7292 / S-41).